A 556-amino-acid chain; its full sequence is Hydroxylamine reductase (556 aa).

Positions 4, 7, 19, and 26 each coordinate [4Fe-4S] cluster. Hybrid [4Fe-2O-2S] cluster contacts are provided by His252, Glu276, Cys320, Cys407, Cys435, Cys460, Glu494, and Lys496. Cys407 carries the cysteine persulfide modification.

This sequence belongs to the HCP family. It depends on [4Fe-4S] cluster as a cofactor. The cofactor is hybrid [4Fe-2O-2S] cluster.

It localises to the cytoplasm. It carries out the reaction A + NH4(+) + H2O = hydroxylamine + AH2 + H(+). Catalyzes the reduction of hydroxylamine to form NH(3) and H(2)O. In Acidithiobacillus ferridurans, this protein is Hydroxylamine reductase.